A 373-amino-acid polypeptide reads, in one-letter code: DNA replication and repair protein RecF (373 aa).

An ATP-binding site is contributed by 30–37; it reads GENAQGKT.

Belongs to the RecF family.

Its subcellular location is the cytoplasm. Functionally, the RecF protein is involved in DNA metabolism; it is required for DNA replication and normal SOS inducibility. RecF binds preferentially to single-stranded, linear DNA. It also seems to bind ATP. This Limosilactobacillus fermentum (strain NBRC 3956 / LMG 18251) (Lactobacillus fermentum) protein is DNA replication and repair protein RecF.